The following is a 393-amino-acid chain: Ethanol acetyltransferase 1 (393 aa).

The N-terminal 25 residues, M1–V25, are a transit peptide targeting the mitochondrion. One can recognise an AB hydrolase-1 domain in the interval P49–E151. Catalysis depends on charge relay system residues S122, D146, and H296. Residues A343–K354 are compositionally biased toward basic and acidic residues. Residues A343–A393 form a disordered region. Positions V355–T375 are enriched in polar residues. Residues D379 to A393 are compositionally biased toward basic and acidic residues.

This sequence belongs to the AB hydrolase superfamily.

Its subcellular location is the mitochondrion. It catalyses the reaction ethanol + acetyl-CoA = ethyl acetate + CoA. The enzyme catalyses acetyl-CoA + H2O = acetate + CoA + H(+). It carries out the reaction ethyl acetate + H2O = ethanol + acetate + H(+). Its function is as follows. Alcohol acetyltransferase that catalyzes the synthesis of ethyl acetate from ethanol and acetyl-CoA. Can also function as a thioesterase by hydrolyzing acetyl-CoA in the absence of ethanol, as well as esterase hydrolyzing ethyl acetate. This is Ethanol acetyltransferase 1 (EAT1) from Wickerhamomyces ciferrii (strain ATCC 14091 / BCRC 22168 / CBS 111 / JCM 3599 / NBRC 0793 / NRRL Y-1031 F-60-10) (Yeast).